Here is a 291-residue protein sequence, read N- to C-terminus: Transmembrane protein 41B (291 aa).

Positions 1-39 (MAKGRVAERSQLGAHHTTPVGDGAAGTRGLAAPGSRDHQ) are disordered. Thr-18 is subject to Phosphothreonine. Ser-35 bears the Phosphoserine mark. Helical transmembrane passes span 52–72 (MSLL…FLVY), 109–129 (FYVQ…TFAI), 147–169 (LALF…LSYL), 197–217 (LINY…FINI), 225–245 (PLKV…FVAI), and 262–282 (SWNS…PAIF). The interval 140–251 (GFLYPFPLAL…FVAIKAGTTL (112 aa)) is VTT domain; required for its function in autophagy.

The protein belongs to the TMEM41 family. As to quaternary structure, interacts with VMP1. Interacts with COPA, COPB1, VDAC1 and ERLIN2. Interacts with ATG2A. Interacts with SURF4. In terms of assembly, (Microbial infection) Interacts with Zika virus NS4A protein and Yellow fever virus NS4B protein.

It localises to the endoplasmic reticulum membrane. The protein localises to the endomembrane system. It is found in the cytoplasm. It catalyses the reaction a 1,2-diacyl-sn-glycero-3-phospho-L-serine(in) = a 1,2-diacyl-sn-glycero-3-phospho-L-serine(out). The catalysed reaction is cholesterol(in) = cholesterol(out). It carries out the reaction a 1,2-diacyl-sn-glycero-3-phosphocholine(in) = a 1,2-diacyl-sn-glycero-3-phosphocholine(out). The enzyme catalyses a 1,2-diacyl-sn-glycero-3-phosphoethanolamine(in) = a 1,2-diacyl-sn-glycero-3-phosphoethanolamine(out). Functionally, phospholipid scramblase involved in lipid homeostasis and membrane dynamics processes. Has phospholipid scramblase activity toward cholesterol and phosphatidylserine, as well as phosphatidylethanolamine and phosphatidylcholine. Required for autophagosome formation: participates in early stages of autophagosome biogenesis at the endoplasmic reticulum (ER) membrane by reequilibrating the leaflets of the ER as lipids are extracted by ATG2 (ATG2A or ATG2B) to mediate autophagosome assembly. In addition to autophagy, involved in other processes in which phospholipid scramblase activity is required. Required for normal motor neuron development. (Microbial infection) Critical host factor required for infection by human coronaviruses SARS-CoV-2, HCoV-OC43, HCoV-NL63, and HCoV-229E, as well as all flaviviruses tested such as Zika virus and Yellow fever virus. Required post-entry of the virus to facilitate the ER membrane remodeling necessary to form replication organelles. The protein is Transmembrane protein 41B of Homo sapiens (Human).